Reading from the N-terminus, the 99-residue chain is Large ribosomal subunit protein uL23 (99 aa).

The protein belongs to the universal ribosomal protein uL23 family. As to quaternary structure, part of the 50S ribosomal subunit. Contacts protein L29, and trigger factor when it is bound to the ribosome.

Its function is as follows. One of the early assembly proteins it binds 23S rRNA. One of the proteins that surrounds the polypeptide exit tunnel on the outside of the ribosome. Forms the main docking site for trigger factor binding to the ribosome. In Shewanella woodyi (strain ATCC 51908 / MS32), this protein is Large ribosomal subunit protein uL23.